We begin with the raw amino-acid sequence, 218 residues long: uncharacterized protein (218 aa).

Belongs to the glycosyltransferase 2 family.

This is an uncharacterized protein from Mycobacterium bovis (strain ATCC BAA-935 / AF2122/97).